The following is a 151-amino-acid chain: Large ribosomal subunit protein bL9 (151 aa).

Belongs to the bacterial ribosomal protein bL9 family.

Functionally, binds to the 23S rRNA. The sequence is that of Large ribosomal subunit protein bL9 from Dehalococcoides mccartyi (strain ATCC BAA-2100 / JCM 16839 / KCTC 5957 / BAV1).